A 376-amino-acid chain; its full sequence is N-acetyldiaminopimelate deacetylase (376 aa).

Aspartate 69 is a catalytic residue. Glutamate 128 (proton acceptor) is an active-site residue.

It belongs to the peptidase M20A family. N-acetyldiaminopimelate deacetylase subfamily.

The catalysed reaction is N-acetyl-(2S,6S)-2,6-diaminopimelate + H2O = (2S,6S)-2,6-diaminopimelate + acetate. It participates in amino-acid biosynthesis; L-lysine biosynthesis via DAP pathway; LL-2,6-diaminopimelate from (S)-tetrahydrodipicolinate (acetylase route): step 3/3. Functionally, catalyzes the conversion of N-acetyl-diaminopimelate to diaminopimelate and acetate. The chain is N-acetyldiaminopimelate deacetylase from Streptococcus pneumoniae serotype 19F (strain G54).